A 237-amino-acid chain; its full sequence is Uridylate kinase (237 aa).

ATP is bound at residue 11 to 14; it reads KLSG. An involved in allosteric activation by GTP region spans residues 18-23; the sequence is GGGGIG. Position 52 (G52) interacts with UMP. ATP is bound by residues G53 and R57. Residues D72 and 133-140 each bind UMP; that span reads SGMPYFST. ATP-binding residues include Q161, Y167, and D170.

The protein belongs to the UMP kinase family. As to quaternary structure, homohexamer.

The protein resides in the cytoplasm. It catalyses the reaction UMP + ATP = UDP + ADP. The protein operates within pyrimidine metabolism; CTP biosynthesis via de novo pathway; UDP from UMP (UMPK route): step 1/1. With respect to regulation, allosterically activated by GTP. Inhibited by UTP. Catalyzes the reversible phosphorylation of UMP to UDP. The polypeptide is Uridylate kinase (Cutibacterium acnes (strain DSM 16379 / KPA171202) (Propionibacterium acnes)).